The chain runs to 290 residues: Glycine--tRNA ligase alpha subunit (290 aa).

Belongs to the class-II aminoacyl-tRNA synthetase family. Tetramer of two alpha and two beta subunits.

It localises to the cytoplasm. It carries out the reaction tRNA(Gly) + glycine + ATP = glycyl-tRNA(Gly) + AMP + diphosphate. In Zymomonas mobilis subsp. mobilis (strain ATCC 31821 / ZM4 / CP4), this protein is Glycine--tRNA ligase alpha subunit.